Reading from the N-terminus, the 56-residue chain is Sec-independent protein translocase protein TatA (56 aa).

Residues 1–21 (MALGPWQIFLILVIILVLFGA) form a helical membrane-spanning segment.

It belongs to the TatA/E family. As to quaternary structure, the Tat system comprises two distinct complexes: a TatABC complex, containing multiple copies of TatA, TatB and TatC subunits, and a separate TatA complex, containing only TatA subunits. Substrates initially bind to the TatABC complex, which probably triggers association of the separate TatA complex to form the active translocon.

It is found in the cell inner membrane. Part of the twin-arginine translocation (Tat) system that transports large folded proteins containing a characteristic twin-arginine motif in their signal peptide across membranes. TatA could form the protein-conducting channel of the Tat system. The chain is Sec-independent protein translocase protein TatA from Ehrlichia ruminantium (strain Welgevonden).